The primary structure comprises 469 residues: GDP-fucose protein O-fucosyltransferase 3 (469 aa).

Topologically, residues 1–9 (MVNRIWEKR) are cytoplasmic. The helical; Signal-anchor for type II membrane protein transmembrane segment at 10 to 30 (FWISCFFIIFLFILVIFQVMV) threads the bilayer. At 31-469 (ELGRFEKKET…EFWNLVFKFW (439 aa)) the chain is on the lumenal side. N-linked (GlcNAc...) asparagine glycans are attached at residues asparagine 100, asparagine 158, asparagine 308, and asparagine 333. Cysteine 379 and cysteine 382 are oxidised to a cystine. N-linked (GlcNAc...) asparagine glycosylation is present at asparagine 455.

It belongs to the glycosyltransferase 10 family.

The protein localises to the endoplasmic reticulum membrane. The catalysed reaction is L-threonyl-[protein] + GDP-beta-L-fucose = 3-O-(alpha-L-fucosyl)-L-threonyl-[protein] + GDP + H(+). The enzyme catalyses L-seryl-[protein] + GDP-beta-L-fucose = 3-O-(alpha-L-fucosyl)-L-seryl-[protein] + GDP + H(+). It functions in the pathway protein modification; protein glycosylation. Its function is as follows. Protein O-fucosyltransferase that specifically catalyzes O-fucosylation of serine or threonine residues in EMI domains of target proteins. Attaches fucose through an O-glycosidic linkage. O-fucosylation of EMI domain-containing proteins may be required for facilitating protein folding and secretion. This is GDP-fucose protein O-fucosyltransferase 3 (fut10) from Xenopus laevis (African clawed frog).